We begin with the raw amino-acid sequence, 388 residues long: Gastricsin (388 aa).

The signal sequence occupies residues 1-16 (MKWMVVVLVCLQLLEA). A propeptide spans 17 to 59 (AVVKVPLKKFKSIRETMKEKGLLGEFLRTHKYDPAWKYRFGDL) (activation peptide). The 313-residue stretch at 73-385 (YFGEISIGTP…DLGNNRVGFA (313 aa)) folds into the Peptidase A1 domain. Residue D91 is part of the active site. Intrachain disulfides connect C104/C109 and C267/C271. D276 is a catalytic residue. C310 and C343 are joined by a disulfide.

It belongs to the peptidase A1 family.

It is found in the secreted. The catalysed reaction is More restricted specificity than pepsin A, but shows preferential cleavage at Tyr-|-Xaa bonds. High activity on hemoglobin.. Hydrolyzes a variety of proteins. This Homo sapiens (Human) protein is Gastricsin (PGC).